The following is a 490-amino-acid chain: Probable glycine dehydrogenase (decarboxylating) subunit 2 (490 aa).

Lys273 carries the N6-(pyridoxal phosphate)lysine modification.

The protein belongs to the GcvP family. C-terminal subunit subfamily. In terms of assembly, the glycine cleavage system is composed of four proteins: P, T, L and H. In this organism, the P 'protein' is a heterodimer of two subunits. Pyridoxal 5'-phosphate is required as a cofactor.

It carries out the reaction N(6)-[(R)-lipoyl]-L-lysyl-[glycine-cleavage complex H protein] + glycine + H(+) = N(6)-[(R)-S(8)-aminomethyldihydrolipoyl]-L-lysyl-[glycine-cleavage complex H protein] + CO2. In terms of biological role, the glycine cleavage system catalyzes the degradation of glycine. The P protein binds the alpha-amino group of glycine through its pyridoxal phosphate cofactor; CO(2) is released and the remaining methylamine moiety is then transferred to the lipoamide cofactor of the H protein. This Staphylococcus aureus (strain Mu50 / ATCC 700699) protein is Probable glycine dehydrogenase (decarboxylating) subunit 2.